The sequence spans 120 residues: Small ribosomal subunit protein uS13 (120 aa).

Positions 94-120 (GLPLRGQRTRTNARTRKGPRKAIAGKK) are disordered.

The protein belongs to the universal ribosomal protein uS13 family. As to quaternary structure, part of the 30S ribosomal subunit. Forms a loose heterodimer with protein S19. Forms two bridges to the 50S subunit in the 70S ribosome.

In terms of biological role, located at the top of the head of the 30S subunit, it contacts several helices of the 16S rRNA. In the 70S ribosome it contacts the 23S rRNA (bridge B1a) and protein L5 of the 50S subunit (bridge B1b), connecting the 2 subunits; these bridges are implicated in subunit movement. Contacts the tRNAs in the A and P-sites. In Aromatoleum aromaticum (strain DSM 19018 / LMG 30748 / EbN1) (Azoarcus sp. (strain EbN1)), this protein is Small ribosomal subunit protein uS13.